The chain runs to 338 residues: Mitochondrial glutathione transporter SLC25A40 (338 aa).

Solcar repeat units follow at residues 13 to 131 (VTPL…LSAL), 139 to 223 (NETC…LKKW), and 233 to 327 (PTFM…GKAF). Transmembrane regions (helical) follow at residues 19 to 39 (MLAS…LDVV), 103 to 123 (LWSG…IYFT), 142 to 162 (CIPI…ISPL), 199 to 220 (WAPT…YEIL), 239 to 259 (FTSG…FDVV), and 298 to 318 (GLFS…AIMI).

Belongs to the mitochondrial carrier (TC 2.A.29) family.

It localises to the mitochondrion inner membrane. It carries out the reaction glutathione(in) = glutathione(out). Probable mitochondrial transporter required for glutathione import into mitochondria. Glutathione, which plays key roles in oxidative metabolism, is produced exclusively in the cytosol and is imported in many organelles. Mitochondrial glutathione is required for the activity and stability of proteins containing iron-sulfur clusters, as well as erythropoiesis. The sequence is that of Mitochondrial glutathione transporter SLC25A40 from Homo sapiens (Human).